The following is a 596-amino-acid chain: Cis-3-hydroxy-L-proline dehydratase (596 aa).

Ser-67 functions as the Proton acceptor in the catalytic mechanism.

This sequence belongs to the AcnX family. In terms of assembly, monomer. The cofactor is Fe(3+).

It carries out the reaction cis-3-hydroxy-L-proline = 1-pyrroline-2-carboxylate + H2O. Inhibited by Zn(2+). Not inhibited by pyrrole-2-carboxylate nor its derivative 2-thiophenecarboxylate. Functionally, catalyzes the dehydration of cis-3-hydroxy-L-proline (c3LHyp) to Delta(1)-pyrroline-2-carboxylate (Pyr2C). No activity with L-proline, trans-4-hydroxy-L-proline (t4LHyp), cis-4-hydroxy-L-proline (c4LHyp), trans-3-hydroxy-L-proline (t3LHyp), D-proline, cis-4-hydroxy-D-proline (c4DHyp), trans-4-hydroxy-D-proline (t4DHyp) or L-serine as substrates. Because of the low catalytic efficiency, C3LHyp is likely not a main physiological substrate of this enzyme in H.jecorina. In Hypocrea jecorina (strain QM6a) (Trichoderma reesei), this protein is Cis-3-hydroxy-L-proline dehydratase.